A 181-amino-acid chain; its full sequence is Adenylate kinase (181 aa).

ATP is bound at residue 10-15; that stretch reads GAGKGT. Residues 30–59 form an NMP region; that stretch reads STGDLFRSNISEGTELGLQAKQYLDAGDLV. Residues threonine 31, arginine 36, 57-59, 85-88, and glutamine 92 each bind AMP; these read DLV and GFPR. Residues 126 to 132 form an LID region; that stretch reads GRGRADD. An ATP-binding site is contributed by arginine 127. Residues arginine 129 and arginine 140 each coordinate AMP. ATP is bound at residue glycine 166.

This sequence belongs to the adenylate kinase family. As to quaternary structure, monomer.

It localises to the cytoplasm. It carries out the reaction AMP + ATP = 2 ADP. It participates in purine metabolism; AMP biosynthesis via salvage pathway; AMP from ADP: step 1/1. In terms of biological role, catalyzes the reversible transfer of the terminal phosphate group between ATP and AMP. Plays an important role in cellular energy homeostasis and in adenine nucleotide metabolism. This Mycobacteroides abscessus (strain ATCC 19977 / DSM 44196 / CCUG 20993 / CIP 104536 / JCM 13569 / NCTC 13031 / TMC 1543 / L948) (Mycobacterium abscessus) protein is Adenylate kinase.